A 231-amino-acid polypeptide reads, in one-letter code: Glutathione-specific gamma-glutamylcyclotransferase (231 aa).

Ile49–Ser54 lines the substrate pocket. Catalysis depends on Glu127, which acts as the Proton acceptor.

This sequence belongs to the gamma-glutamylcyclotransferase family. ChaC subfamily.

It catalyses the reaction glutathione = L-cysteinylglycine + 5-oxo-L-proline. Functionally, catalyzes the cleavage of glutathione into 5-oxo-L-proline and a Cys-Gly dipeptide. Acts specifically on glutathione, but not on other gamma-glutamyl peptides. This is Glutathione-specific gamma-glutamylcyclotransferase from Escherichia coli (strain K12).